A 154-amino-acid polypeptide reads, in one-letter code: UPF0756 membrane protein EAT1b_0668 (154 aa).

The next 5 helical transmembrane spans lie at 5–25, 52–72, 82–102, 107–127, and 129–149; these read LFLL…VIIA, WGVT…DIGF, PVGI…GQGV, VDPV…GFMK, and IPVG…GYQV.

The protein belongs to the UPF0756 family.

It is found in the cell membrane. This is UPF0756 membrane protein EAT1b_0668 from Exiguobacterium sp. (strain ATCC BAA-1283 / AT1b).